The following is a 332-amino-acid chain: Biotin synthase (332 aa).

Residues 46-275 (YYGKKVKLNM…SKEIRISGGR (230 aa)) form the Radical SAM core domain. Residues C64, C68, and C71 each coordinate [4Fe-4S] cluster. [2Fe-2S] cluster-binding residues include C108, C140, C200, and R270.

Belongs to the radical SAM superfamily. Biotin synthase family. Homodimer. Requires [4Fe-4S] cluster as cofactor. It depends on [2Fe-2S] cluster as a cofactor.

The catalysed reaction is (4R,5S)-dethiobiotin + (sulfur carrier)-SH + 2 reduced [2Fe-2S]-[ferredoxin] + 2 S-adenosyl-L-methionine = (sulfur carrier)-H + biotin + 2 5'-deoxyadenosine + 2 L-methionine + 2 oxidized [2Fe-2S]-[ferredoxin]. Its pathway is cofactor biosynthesis; biotin biosynthesis; biotin from 7,8-diaminononanoate: step 2/2. Its function is as follows. Catalyzes the conversion of dethiobiotin (DTB) to biotin by the insertion of a sulfur atom into dethiobiotin via a radical-based mechanism. This Lysinibacillus sphaericus (Bacillus sphaericus) protein is Biotin synthase.